Reading from the N-terminus, the 363-residue chain is Glutamate 5-kinase (363 aa).

Lys-3 contacts ATP. Residues Ser-43, Asp-128, and Asn-140 each coordinate substrate. ATP-binding positions include 160–161 (TD) and 202–208 (TGGMRTK). One can recognise a PUA domain in the interval 267 to 349 (AGAILIDDGA…REIENVLGYS (83 aa)).

It belongs to the glutamate 5-kinase family.

The protein resides in the cytoplasm. The catalysed reaction is L-glutamate + ATP = L-glutamyl 5-phosphate + ADP. The protein operates within amino-acid biosynthesis; L-proline biosynthesis; L-glutamate 5-semialdehyde from L-glutamate: step 1/2. Its function is as follows. Catalyzes the transfer of a phosphate group to glutamate to form L-glutamate 5-phosphate. This Xanthomonas axonopodis pv. citri (strain 306) protein is Glutamate 5-kinase.